The chain runs to 166 residues: Lipoprotein signal peptidase (166 aa).

3 helical membrane passes run 12 to 32, 70 to 90, and 102 to 122; these read WLWL…LILQ, WFFA…MYRS, and ALII…GFVV. Catalysis depends on residues D123 and D141. The chain crosses the membrane as a helical span at residues 137-157; it reads FNLADTAICIGAALIVLEGFL.

This sequence belongs to the peptidase A8 family.

It localises to the cell inner membrane. It catalyses the reaction Release of signal peptides from bacterial membrane prolipoproteins. Hydrolyzes -Xaa-Yaa-Zaa-|-(S,diacylglyceryl)Cys-, in which Xaa is hydrophobic (preferably Leu), and Yaa (Ala or Ser) and Zaa (Gly or Ala) have small, neutral side chains.. It functions in the pathway protein modification; lipoprotein biosynthesis (signal peptide cleavage). In terms of biological role, this protein specifically catalyzes the removal of signal peptides from prolipoproteins. This Salmonella paratyphi A (strain ATCC 9150 / SARB42) protein is Lipoprotein signal peptidase.